We begin with the raw amino-acid sequence, 153 residues long: MTMQVQYKILDPRLGKEIEMPHYGTKGSAGLDLRACIENDMIIEPGQTVLIPTGMAIHLDDPGLAAMLLPRSGLGHKHGIVLGNLVGLIDSDYQGPLMVSCWNRSEEAYNVTVGERIAQMVIVPVLQPVFTQVEEFGDATERGEGGFGHTGSH.

Substrate is bound by residues 71–73 (RSG), asparagine 84, 88–90 (LID), and methionine 98.

This sequence belongs to the dUTPase family. The cofactor is Mg(2+).

The enzyme catalyses dUTP + H2O = dUMP + diphosphate + H(+). It participates in pyrimidine metabolism; dUMP biosynthesis; dUMP from dCTP (dUTP route): step 2/2. Its function is as follows. This enzyme is involved in nucleotide metabolism: it produces dUMP, the immediate precursor of thymidine nucleotides and it decreases the intracellular concentration of dUTP so that uracil cannot be incorporated into DNA. The sequence is that of Deoxyuridine 5'-triphosphate nucleotidohydrolase from Hydrogenovibrio crunogenus (strain DSM 25203 / XCL-2) (Thiomicrospira crunogena).